A 136-amino-acid polypeptide reads, in one-letter code: Large ribosomal subunit protein uL16 (136 aa).

The protein belongs to the universal ribosomal protein uL16 family. In terms of assembly, part of the 50S ribosomal subunit.

Functionally, binds 23S rRNA and is also seen to make contacts with the A and possibly P site tRNAs. This chain is Large ribosomal subunit protein uL16, found in Aggregatibacter actinomycetemcomitans (Actinobacillus actinomycetemcomitans).